The primary structure comprises 251 residues: ATP synthase subunit a (251 aa).

The next 5 membrane-spanning stretches (helical) occupy residues 14-34 (GFVKLNGTIIYTWLLMLLLAV), 78-98 (YLPFLGTLFVFVAVANLFAVF), 107-127 (SLSTTVALAICVFVAVPFYGI), 174-194 (MILAIMLIITPFIFPVVMGVL), and 196-216 (LLIGGVQAYIFSILATVYIAA). Residues 224–251 (NAGASDDEGGEDAKSACAAGGKICKHKP) are disordered.

It belongs to the ATPase A chain family. In terms of assembly, F-type ATPases have 2 components, CF(1) - the catalytic core - and CF(0) - the membrane proton channel. CF(1) has five subunits: alpha(3), beta(3), gamma(1), delta(1), epsilon(1). CF(0) has three main subunits: a(1), b(2) and c(9-12). The alpha and beta chains form an alternating ring which encloses part of the gamma chain. CF(1) is attached to CF(0) by a central stalk formed by the gamma and epsilon chains, while a peripheral stalk is formed by the delta and b chains.

Its subcellular location is the cell inner membrane. In terms of biological role, key component of the proton channel; it plays a direct role in the translocation of protons across the membrane. The sequence is that of ATP synthase subunit a from Nitrosospira multiformis (strain ATCC 25196 / NCIMB 11849 / C 71).